The sequence spans 502 residues: N-fatty-acyl-amino acid synthase/hydrolase PM20D1 (502 aa).

An N-terminal signal peptide occupies residues 1–25 (MAQRCVCVLALVAMLLLVFPTVSRS). Position 125 (H125) interacts with Zn(2+). Residue D127 is part of the active site. D157 contacts Zn(2+). The Proton acceptor role is filled by E191. Zn(2+) is bound by residues E192 and D217. An N-linked (GlcNAc...) asparagine glycan is attached at N252. H464 serves as a coordination point for Zn(2+).

This sequence belongs to the peptidase M20A family. Zn(2+) serves as cofactor.

It is found in the secreted. It catalyses the reaction an N-acyl-L-amino acid + H2O = an L-alpha-amino acid + a carboxylate. The catalysed reaction is an N-acyl-aromatic L-alpha-amino acid + H2O = an aromatic L-alpha-amino acid + a carboxylate. It carries out the reaction L-phenylalanine + (9Z)-octadecenoate = N-(9Z-octadecenoyl)-L-phenylalanine + H2O. The enzyme catalyses N-(9Z-octadecenoyl)-L-leucine + H2O = L-leucine + (9Z)-octadecenoate. It catalyses the reaction N-(5Z,8Z,11Z,14Z)-eicosatetraenoyl-glycine + H2O = (5Z,8Z,11Z,14Z)-eicosatetraenoate + glycine. The catalysed reaction is N-hexadecanoyl-L-phenylalanine + H2O = hexadecanoate + L-phenylalanine. It carries out the reaction N-octadecanoyl-L-phenylalanine + H2O = octadecanoate + L-phenylalanine. The enzyme catalyses N-(4Z,7Z,10Z,13Z,16Z,19Z-docosahexaenoyl)-L-phenylalanine + H2O = (4Z,7Z,10Z,13Z,16Z,19Z)-docosahexaenoate + L-phenylalanine. It catalyses the reaction N-(9Z-octadecenoyl)-L-asparagine + H2O = L-asparagine + (9Z)-octadecenoate. The catalysed reaction is (9Z)-octadecenoate + glycine = N-(9Z-octadecenoyl)glycine + H2O. It carries out the reaction N-(9Z-octadecenoyl)-L-lysine + H2O = L-lysine + (9Z)-octadecenoate. The enzyme catalyses N-(9Z-octadecenoyl)-L-methionine + H2O = (9Z)-octadecenoate + L-methionine. It catalyses the reaction N-(9Z-octadecenoyl)-L-serine + H2O = L-serine + (9Z)-octadecenoate. The catalysed reaction is N-(9Z-octadecenoyl)-L-tryptophan + H2O = L-tryptophan + (9Z)-octadecenoate. It carries out the reaction N-(9Z-octadecenoyl)-L-tyrosine + H2O = L-tyrosine + (9Z)-octadecenoate. The enzyme catalyses N-(9Z-octadecenoyl)-L-glutamine + H2O = L-glutamine + (9Z)-octadecenoate. It catalyses the reaction N-(5Z,8Z,11Z,14Z-eicosatetraenoyl)-L-serine + H2O = (5Z,8Z,11Z,14Z)-eicosatetraenoate + L-serine. The catalysed reaction is (5Z,8Z,11Z,14Z)-eicosatetraenoate + L-phenylalanine = N-(5Z,8Z,11Z,14Z-eicosatetraenoyl)-L-phenylalanine + H2O. The protein operates within amino-acid metabolism. It participates in energy metabolism. Its pathway is lipid metabolism; fatty acid metabolism. With respect to regulation, lipoproteins are powerful coactivators of PM20D1 activity in vitro and NAA biosynthesis in vivo. Its function is as follows. Secreted enzyme that regulates the endogenous N-fatty acyl amino acid (NAAs) tissue and circulating levels by functioning as a bidirectional NAA synthase/hydrolase. It condenses free fatty acids and free amino acids to generate NAAs and bidirectionally catalyzes the reverse hydrolysis reaction. Some of these NAAs stimulate oxidative metabolism via mitochondrial uncoupling, increasing energy expenditure in a UPC1-independent manner. Thereby, this secreted protein may indirectly regulate whole body energy expenditure. PM20D1 circulates in tight association with both low- and high-density (LDL and HDL,respectively) lipoprotein particles. This chain is N-fatty-acyl-amino acid synthase/hydrolase PM20D1, found in Homo sapiens (Human).